A 186-amino-acid chain; its full sequence is Large ribosomal subunit protein uL16 (186 aa).

It belongs to the universal ribosomal protein uL16 family.

The chain is Large ribosomal subunit protein uL16 from Nanoarchaeum equitans (strain Kin4-M).